We begin with the raw amino-acid sequence, 464 residues long: Methylenetetrahydrofolate--tRNA-(uracil-5-)-methyltransferase TrmFO (464 aa).

Residue 13 to 18 (GGGLAG) coordinates FAD.

It belongs to the MnmG family. TrmFO subfamily. The cofactor is FAD.

It localises to the cytoplasm. The catalysed reaction is uridine(54) in tRNA + (6R)-5,10-methylene-5,6,7,8-tetrahydrofolate + NADH + H(+) = 5-methyluridine(54) in tRNA + (6S)-5,6,7,8-tetrahydrofolate + NAD(+). The enzyme catalyses uridine(54) in tRNA + (6R)-5,10-methylene-5,6,7,8-tetrahydrofolate + NADPH + H(+) = 5-methyluridine(54) in tRNA + (6S)-5,6,7,8-tetrahydrofolate + NADP(+). In terms of biological role, catalyzes the folate-dependent formation of 5-methyl-uridine at position 54 (M-5-U54) in all tRNAs. The sequence is that of Methylenetetrahydrofolate--tRNA-(uracil-5-)-methyltransferase TrmFO from Bartonella bacilliformis (strain ATCC 35685 / KC583 / Herrer 020/F12,63).